A 141-amino-acid chain; its full sequence is Putative pre-16S rRNA nuclease (141 aa).

This sequence belongs to the YqgF nuclease family.

It is found in the cytoplasm. In terms of biological role, could be a nuclease involved in processing of the 5'-end of pre-16S rRNA. The sequence is that of Putative pre-16S rRNA nuclease from Clostridioides difficile (strain 630) (Peptoclostridium difficile).